The chain runs to 490 residues: Allantoin permease (490 aa).

Transmembrane regions (helical) follow at residues 36–56 (IWMGCIHNIPTYATVGGLIAI), 60–80 (PWQVLAIIITASLILFGALAL), 116–136 (AIMWLGIQTFAGSTALNILLL), 151–171 (ILGIHLSGLLSFVFFWAIHLL), 190–210 (LVYLVFGGMVWWAVDIAGGLG), 225–245 (TFWPFAAGVTGIIGIWATLIL), 265–285 (FYGLPGTFALFAFASITVTSG), 308–328 (YVIVLSVITLCIATISVNVAA), 350–370 (GSFITALLALFTVPWKLMESA), 373–393 (VYAFLGLIGGMLGPVAGVMMA), 425–445 (AFAATMLGALISLIGMYVPVL), and 448–468 (LYDISWFVGVLISFLFYIVLM).

This sequence belongs to the purine-cytosine permease (2.A.39) family.

Its subcellular location is the cell membrane. It catalyses the reaction (S)-allantoin(in) + H(+)(in) = (S)-allantoin(out) + H(+)(out). Uptake of allantoin into the cell. Allantoin uptake is not dependent on sodium, and PucI is likely to be a proton-coupled symporter. Shows highest recognition for binding of allantoin, good recognition for binding of hydantoin, L-5-benzylhydantoin and 5-hydroxyhydantoin, and to a lesser extent for a range of nucleobases and nucleosides. The polypeptide is Allantoin permease (Bacillus subtilis (strain 168)).